Consider the following 351-residue polypeptide: MLYSLVKKYLFSLDAEDAHEKVCKILRMLSSSPFLCNLIDSQWGYKNPKLENEILGLHFPNPLGLAAGFDKNASMLRALTAFGFGYLEAGTLTNEAQMGNERPRLFRHIEEESLQNAMGFNNYGAVLGARSFKRFAPYKTPIGINLGKNKHIEQAHALEDYKAVLNQCLNIGDYYTFNLSSPNTPNLRDLQNKAFVHELFCMAKEMTHKPLFLKIAPDLETDDMLEIVNSAIEAGAHGIIATNTTIDKSLVFAPKEMGGLSGKCLTKKSREIFKELAKAFFNKTILVSVGGISGAKEAYERIKMGASLLQIYSAFIYNGPNLCQNILKDLVKLLQKDGFLSVKEAIGADLR.

FMN contacts are provided by residues 67–71 (AGFDK) and Thr91. Lys71 contacts substrate. 116–120 (NAMGF) serves as a coordination point for substrate. FMN is bound by residues Asn145 and Asn178. Asn178 contributes to the substrate binding site. The active-site Nucleophile is the Ser181. Asn183 contributes to the substrate binding site. FMN contacts are provided by Lys214 and Thr242. 243 to 244 (NT) is a binding site for substrate. Residues Gly262, Gly291, and 312–313 (YS) contribute to the FMN site.

Belongs to the dihydroorotate dehydrogenase family. Type 2 subfamily. Monomer. Requires FMN as cofactor.

It is found in the cell membrane. It catalyses the reaction (S)-dihydroorotate + a quinone = orotate + a quinol. It participates in pyrimidine metabolism; UMP biosynthesis via de novo pathway; orotate from (S)-dihydroorotate (quinone route): step 1/1. In terms of biological role, catalyzes the conversion of dihydroorotate to orotate with quinone as electron acceptor. In Helicobacter pylori (strain HPAG1), this protein is Dihydroorotate dehydrogenase (quinone).